The following is a 605-amino-acid chain: UvrABC system protein C (605 aa).

The 80-residue stretch at 13–92 folds into the GIY-YIG domain; that stretch reads TSPGVYLMKD…IKKHHPKYNV (80 aa). The 36-residue stretch at 205–240 folds into the UVR domain; the sequence is SEIIQDLEKSIEKASQEQKFEQAGIYYRTLKLIQQA.

The protein belongs to the UvrC family. Interacts with UvrB in an incision complex.

The protein localises to the cytoplasm. Its function is as follows. The UvrABC repair system catalyzes the recognition and processing of DNA lesions. UvrC both incises the 5' and 3' sides of the lesion. The N-terminal half is responsible for the 3' incision and the C-terminal half is responsible for the 5' incision. In Chlamydia caviae (strain ATCC VR-813 / DSM 19441 / 03DC25 / GPIC) (Chlamydophila caviae), this protein is UvrABC system protein C.